Reading from the N-terminus, the 670-residue chain is tRNA 5-methylaminomethyl-2-thiouridine biosynthesis bifunctional protein MnmC (670 aa).

The tRNA (mnm(5)s(2)U34)-methyltransferase stretch occupies residues 1–242 (MTFSVQHAEI…KRECLSGLKI (242 aa)). Residues 269 to 670 (IGGGIASFCA…KKWLKGSKVE (402 aa)) are FAD-dependent cmnm(5)s(2)U34 oxidoreductase.

This sequence in the N-terminal section; belongs to the methyltransferase superfamily. tRNA (mnm(5)s(2)U34)-methyltransferase family. The protein in the C-terminal section; belongs to the DAO family. Requires FAD as cofactor.

The protein localises to the cytoplasm. It catalyses the reaction 5-aminomethyl-2-thiouridine(34) in tRNA + S-adenosyl-L-methionine = 5-methylaminomethyl-2-thiouridine(34) in tRNA + S-adenosyl-L-homocysteine + H(+). Its function is as follows. Catalyzes the last two steps in the biosynthesis of 5-methylaminomethyl-2-thiouridine (mnm(5)s(2)U) at the wobble position (U34) in tRNA. Catalyzes the FAD-dependent demodification of cmnm(5)s(2)U34 to nm(5)s(2)U34, followed by the transfer of a methyl group from S-adenosyl-L-methionine to nm(5)s(2)U34, to form mnm(5)s(2)U34. This chain is tRNA 5-methylaminomethyl-2-thiouridine biosynthesis bifunctional protein MnmC, found in Haemophilus influenzae (strain 86-028NP).